The chain runs to 616 residues: Chaperone protein HscA (616 aa).

Belongs to the heat shock protein 70 family.

Its function is as follows. Chaperone involved in the maturation of iron-sulfur cluster-containing proteins. Has a low intrinsic ATPase activity which is markedly stimulated by HscB. Involved in the maturation of IscU. The sequence is that of Chaperone protein HscA from Salmonella heidelberg (strain SL476).